Here is a 147-residue protein sequence, read N- to C-terminus: Nucleoside diphosphate kinase (147 aa).

6 residues coordinate ATP: lysine 9, phenylalanine 57, arginine 85, threonine 91, arginine 102, and asparagine 112. Histidine 115 serves as the catalytic Pros-phosphohistidine intermediate.

It belongs to the NDK family. As to quaternary structure, homotetramer. Requires Mg(2+) as cofactor.

Its subcellular location is the cytoplasm. The enzyme catalyses a 2'-deoxyribonucleoside 5'-diphosphate + ATP = a 2'-deoxyribonucleoside 5'-triphosphate + ADP. The catalysed reaction is a ribonucleoside 5'-diphosphate + ATP = a ribonucleoside 5'-triphosphate + ADP. Its function is as follows. Major role in the synthesis of nucleoside triphosphates other than ATP. The ATP gamma phosphate is transferred to the NDP beta phosphate via a ping-pong mechanism, using a phosphorylated active-site intermediate. The protein is Nucleoside diphosphate kinase of Listeria monocytogenes serotype 4b (strain F2365).